The primary structure comprises 146 residues: Large ribosomal subunit protein uL15 (146 aa).

The span at 1–13 shows a compositional bias: basic and acidic residues; the sequence is MKLHELKPAEGSR. Residues 1-57 form a disordered region; it reads MKLHELKPAEGSRKVRNRVGRGTSSGNGKTSGRGQKGQKARSGVGLRPGFEGGQTPL. Positions 23-35 are enriched in gly residues; that stretch reads TSSGNGKTSGRGQ.

Belongs to the universal ribosomal protein uL15 family. In terms of assembly, part of the 50S ribosomal subunit.

Binds to the 23S rRNA. The protein is Large ribosomal subunit protein uL15 of Streptococcus thermophilus (strain CNRZ 1066).